The following is a 478-amino-acid chain: Glycogen synthase (478 aa).

Lys-15 contacts ADP-alpha-D-glucose.

This sequence belongs to the glycosyltransferase 1 family. Bacterial/plant glycogen synthase subfamily.

It catalyses the reaction [(1-&gt;4)-alpha-D-glucosyl](n) + ADP-alpha-D-glucose = [(1-&gt;4)-alpha-D-glucosyl](n+1) + ADP + H(+). It functions in the pathway glycan biosynthesis; glycogen biosynthesis. In terms of biological role, synthesizes alpha-1,4-glucan chains using ADP-glucose. This is Glycogen synthase from Caldicellulosiruptor bescii (strain ATCC BAA-1888 / DSM 6725 / KCTC 15123 / Z-1320) (Anaerocellum thermophilum).